We begin with the raw amino-acid sequence, 430 residues long: Asparagine--tRNA ligase (430 aa).

It belongs to the class-II aminoacyl-tRNA synthetase family. As to quaternary structure, homodimer.

Its subcellular location is the cytoplasm. The enzyme catalyses tRNA(Asn) + L-asparagine + ATP = L-asparaginyl-tRNA(Asn) + AMP + diphosphate + H(+). In Staphylococcus epidermidis (strain ATCC 35984 / DSM 28319 / BCRC 17069 / CCUG 31568 / BM 3577 / RP62A), this protein is Asparagine--tRNA ligase.